The chain runs to 1052 residues: Eukaryotic translation initiation factor 3 subunit A (1052 aa).

Residues 92 to 121 (LKKFIELAEKKVTEAQAKADEIQSSLESAA) are a coiled coil. The PCI domain occupies 339-523 (MTKAASFVLL…GVLTFDTDVF (185 aa)). Positions 580-906 (EARLQAKRAA…AEARRAARRT (327 aa)) form a coiled coil. 2 stretches are compositionally biased toward basic and acidic residues: residues 617–632 (AATD…EETR) and 794–901 (KEVS…EARR). 2 disordered regions span residues 617 to 646 (AATD…AEKQ) and 794 to 1052 (KEVS…QGGQ). Low complexity-rich tracts occupy residues 905-927 (RTGG…TAPR) and 948-964 (KEAA…AAPE). Polar residues predominate over residues 1013–1028 (GSSQPPSRTQTPGSSS).

Belongs to the eIF-3 subunit A family. As to quaternary structure, component of the eukaryotic translation initiation factor 3 (eIF-3) complex.

The protein resides in the cytoplasm. Its function is as follows. RNA-binding component of the eukaryotic translation initiation factor 3 (eIF-3) complex, which is involved in protein synthesis of a specialized repertoire of mRNAs and, together with other initiation factors, stimulates binding of mRNA and methionyl-tRNAi to the 40S ribosome. The eIF-3 complex specifically targets and initiates translation of a subset of mRNAs involved in cell proliferation. This is Eukaryotic translation initiation factor 3 subunit A (tif32) from Aspergillus niger (strain ATCC MYA-4892 / CBS 513.88 / FGSC A1513).